Here is a 66-residue protein sequence, read N- to C-terminus: MKAIYILSVLLLMMLPILSRFATSEGAAQHVEPIQKIRVEQNDCTRGIRCPRGHYCDPGLRQCLPR.

A signal peptide spans 1-19; the sequence is MKAIYILSVLLLMMLPILS.

Belongs to the scoloptoxin-04 family. Post-translationally, contains 2 disulfide bonds. As to expression, expressed by the venom gland.

It is found in the secreted. This is U-scoloptoxin(04)-Ssd2a from Scolopendra dehaani (Thai centipede).